The sequence spans 156 residues: Mitochondrial translation release factor in rescue (156 aa).

The interval Glu-44–Lys-108 is GGQ domain. Residues Gly-58 to Gln-60 carry the GGQ motif. Residues Arg-100–Arg-141 adopt a coiled-coil conformation. 2 stretches are compositionally biased toward basic and acidic residues: residues Leu-114–Lys-125 and Val-132–Thr-156. Positions Leu-114–Thr-156 are disordered.

This sequence belongs to the prokaryotic/mitochondrial release factor family. In terms of assembly, interacts (via C-terminus) with MTRES1 (via S4 domain). Associates with mitoribosomal S39 large subunit, peptidyl tRNA and nascent chain.

The protein localises to the mitochondrion. Its function is as follows. Part of a mitoribosome-associated quality control pathway that prevents aberrant translation by responding to interruptions during elongation. As heterodimer with MTRES1, ejects the unfinished nascent chain and peptidyl transfer RNA (tRNA), respectively, from stalled ribosomes. Recruitment of mitoribosome biogenesis factors to these quality control intermediates suggests additional roles for MTRES1 and MTRF during mitoribosome rescue. The protein is Mitochondrial translation release factor in rescue (mtrfr) of Danio rerio (Zebrafish).